The following is a 175-amino-acid chain: MLPAYLPNPFAALFGGGRPIDNGKTMSDGRRILGDGKTYRGFFVGLIFGALAGLMQMQLLEKYPVLFGVELPTFGTGGSNTTILIFALAVGSLFGDMFMSFFKRRMGLKRGAPLPVIDQLDFVLGALIFAYLASPVWFAEQFTFKVIAVILIITPLLHLATNVVGYFIGVKKEPW.

The next 4 helical transmembrane spans lie at 41–61, 82–102, 122–142, and 147–167; these read GFFV…QLLE, TILI…MSFF, FVLG…AEQF, and IAVI…VGYF.

Belongs to the CDP-archaeol synthase family. Mg(2+) serves as cofactor.

The protein localises to the cell membrane. It catalyses the reaction 2,3-bis-O-(geranylgeranyl)-sn-glycerol 1-phosphate + CTP + H(+) = CDP-2,3-bis-O-(geranylgeranyl)-sn-glycerol + diphosphate. It functions in the pathway membrane lipid metabolism; glycerophospholipid metabolism. Its function is as follows. Catalyzes the formation of CDP-2,3-bis-(O-geranylgeranyl)-sn-glycerol (CDP-archaeol) from 2,3-bis-(O-geranylgeranyl)-sn-glycerol 1-phosphate (DGGGP) and CTP. This reaction is the third ether-bond-formation step in the biosynthesis of archaeal membrane lipids. The sequence is that of CDP-archaeol synthase from Methanococcoides burtonii (strain DSM 6242 / NBRC 107633 / OCM 468 / ACE-M).